The primary structure comprises 475 residues: Subtilisin-like protease PopC (475 aa).

2 disordered regions span residues 1–27 and 57–106; these read MKSYLLVPKESIETQARVGPRGTEQGE and TLPG…QTGA. The Peptidase S8 domain maps to 165 to 475; the sequence is NRGMSSLAER…KTGKGLAVFR (311 aa). Catalysis depends on charge relay system residues D201, H243, and S423.

It belongs to the peptidase S8 family. Interacts with PopD in non-starving cells.

Its subcellular location is the cytoplasm. The protein resides in the periplasm. It localises to the secreted. In non-starving cells, secretion and protease activity are inhibited by formation of a cytoplasmic complex with PopD. In response to starvation, PopD is degraded in a RelA- and FtsH(D)-dependent manner, thereby releasing pre-formed PopC for secretion. Secreted and active during starvation, and rapidly degraded upon secretion. Secretion is significantly and reversibly reduced by carbonyl cyanide m-chlorophenyl hydrazine (CCCP), which dissipates or reduces the proton motive force (PMF), and by nigericin, which affects the pH gradient. Functionally, required for fruiting body formation, a multicellular developmental program that is induced in response to starvation. Acts as a subtilisin-like protease that directly cleaves the CsgA precursor protein (p25) on the cell surface to generate the intercellular C-signal protein (p17) in starving cells. Preferentially acts in cis, i.e. PopC secreted by a cell only cleaves p25 on that cell. May also be important for processing of other protein(s) that are important for development. The polypeptide is Subtilisin-like protease PopC (Myxococcus xanthus (strain DK1622)).